The sequence spans 250 residues: Phosphoribosylaminoimidazole-succinocarboxamide synthase (250 aa).

This sequence belongs to the SAICAR synthetase family.

The catalysed reaction is 5-amino-1-(5-phospho-D-ribosyl)imidazole-4-carboxylate + L-aspartate + ATP = (2S)-2-[5-amino-1-(5-phospho-beta-D-ribosyl)imidazole-4-carboxamido]succinate + ADP + phosphate + 2 H(+). It functions in the pathway purine metabolism; IMP biosynthesis via de novo pathway; 5-amino-1-(5-phospho-D-ribosyl)imidazole-4-carboxamide from 5-amino-1-(5-phospho-D-ribosyl)imidazole-4-carboxylate: step 1/2. This Bifidobacterium longum (strain DJO10A) protein is Phosphoribosylaminoimidazole-succinocarboxamide synthase.